A 170-amino-acid polypeptide reads, in one-letter code: Large ribosomal subunit protein bL17 (170 aa).

A compositionally biased stretch (low complexity) spans 134–144; sequence ASAKAAQAQEK. The disordered stretch occupies residues 134 to 170; sequence ASAKAAQAQEKPAQEEEVEATSDEVAYTSEPDKAAEH.

This sequence belongs to the bacterial ribosomal protein bL17 family. As to quaternary structure, part of the 50S ribosomal subunit. Contacts protein L32.

The protein is Large ribosomal subunit protein bL17 of Mycobacterium leprae (strain Br4923).